The chain runs to 471 residues: Ribosomal protein uS12 methylthiotransferase RimO (471 aa).

Residues 2-122 (IKVSLISLGC…VAPIIQEIYA (121 aa)) enclose the MTTase N-terminal domain. The [4Fe-4S] cluster site is built by Cys11, Cys47, Cys84, Cys166, Cys170, and Cys173. The 244-residue stretch at 152 to 395 (LTPKHFAYVK…MALQKQIAAD (244 aa)) folds into the Radical SAM core domain. Residues 398–458 (KTYVGRTLRV…DYDLLALPPG (61 aa)) form the TRAM domain.

Belongs to the methylthiotransferase family. RimO subfamily. It depends on [4Fe-4S] cluster as a cofactor.

It is found in the cytoplasm. It catalyses the reaction L-aspartate(89)-[ribosomal protein uS12]-hydrogen + (sulfur carrier)-SH + AH2 + 2 S-adenosyl-L-methionine = 3-methylsulfanyl-L-aspartate(89)-[ribosomal protein uS12]-hydrogen + (sulfur carrier)-H + 5'-deoxyadenosine + L-methionine + A + S-adenosyl-L-homocysteine + 2 H(+). Catalyzes the methylthiolation of an aspartic acid residue of ribosomal protein uS12. The chain is Ribosomal protein uS12 methylthiotransferase RimO from Opitutus terrae (strain DSM 11246 / JCM 15787 / PB90-1).